The primary structure comprises 212 residues: Large ribosomal subunit protein uL3 (212 aa).

Residues 127 to 161 (NFKRGPMAHGSKNHRLPGSTGAGTTPGRVFPGKRM) form a disordered region.

The protein belongs to the universal ribosomal protein uL3 family. In terms of assembly, part of the 50S ribosomal subunit. Forms a cluster with proteins L14 and L19.

Its function is as follows. One of the primary rRNA binding proteins, it binds directly near the 3'-end of the 23S rRNA, where it nucleates assembly of the 50S subunit. This is Large ribosomal subunit protein uL3 from Thermosynechococcus vestitus (strain NIES-2133 / IAM M-273 / BP-1).